The primary structure comprises 176 residues: MKIQDYTKQMVDEKSFIDMAYTLLNDKGETMNLYDIIDEFRALGDYEYEEIETRVVQFYTDLNTDGRFLNVGENLWGLRDWYSVDDIEEKIAPTIQKFDVLDADDEEDQNLKLLGEDEMDDDDDIPAQTDDQEELNDPEDEQVEEEINHSDIVIEEDEDELDEDEEDFEDEEDFKA.

An HTH HARE-type domain is found at 14–81 (KSFIDMAYTL…GENLWGLRDW (68 aa)). Residues 114–176 (LGEDEMDDDD…DFEDEEDFKA (63 aa)) form a disordered region. 2 stretches are compositionally biased toward acidic residues: residues 116–145 (EDEMDDDDDIPAQTDDQEELNDPEDEQVEE) and 153–176 (VIEEDEDELDEDEEDFEDEEDFKA).

This sequence belongs to the RpoE family. As to quaternary structure, RNAP is composed of a core of 2 alpha, a beta and a beta' subunits. The core is associated with a delta subunit and one of several sigma factors.

In terms of biological role, participates in both the initiation and recycling phases of transcription. In the presence of the delta subunit, RNAP displays an increased specificity of transcription, a decreased affinity for nucleic acids, and an increased efficiency of RNA synthesis because of enhanced recycling. This is Probable DNA-directed RNA polymerase subunit delta from Staphylococcus aureus (strain bovine RF122 / ET3-1).